A 4749-amino-acid polypeptide reads, in one-letter code: Dynein heavy chain domain-containing protein 1 (4749 aa).

A compositionally biased stretch (low complexity) spans 1–18 (MKPHSQTSPPSLPMPSTS). Disordered stretches follow at residues 1–27 (MKPHSQTSPPSLPMPSTSCRPGQTQKP), 275–308 (ESSDTEQAEGEPAGRKLQVASEAPEEKALKKKSS), and 2690–2785 (ESLA…KLQS). Over residues 2696–2716 (CEEEEVEEEKVPEVESEEEIA) the composition is skewed to acidic residues. Over residues 2738–2749 (QATTGSFLSENS) the composition is skewed to polar residues. Residues 3197–3224 (CQHQESLIENLVRQHDALKAQQEVFLEQ) are a coiled coil. A disordered region spans residues 3568 to 3667 (PPKQNRSLEP…SLPSCLTVLS (100 aa)). The segment covering 3578–3593 (SPKESKEKFHVTKQDS) has biased composition (basic and acidic residues). Residues 3594–3636 (GDNTEDELEDENNEEEDEANEQRKEQKAEENKIQGENEQEVQE) are a coiled coil. The span at 3595 to 3612 (DNTEDELEDENNEEEDEA) shows a compositional bias: acidic residues. Positions 3613–3628 (NEQRKEQKAEENKIQG) are enriched in basic and acidic residues. A compositionally biased stretch (low complexity) spans 3644–3655 (ESSGSHSSLPSE). Positions 3656 to 3667 (TQSLPSCLTVLS) are enriched in polar residues. Coiled coils occupy residues 3818–3838 (MVRTQAKICQLNAQMEELEDQ) and 4431–4451 (ERQLQQRLAQAKKRLVALQAL).

The protein belongs to the dynein heavy chain family. In terms of tissue distribution, expressed in spermatozoa (at protein level).

The protein resides in the cell projection. It is found in the cilium. The protein localises to the flagellum. Functionally, essential for the normal function of sperm flagella axonemes. The polypeptide is Dynein heavy chain domain-containing protein 1 (Dnhd1) (Mus musculus (Mouse)).